The following is a 1366-amino-acid chain: DNA-directed RNA polymerase subunit beta'' (1366 aa).

Residues Cys220, Cys290, Cys297, and Cys300 each contribute to the Zn(2+) site.

The protein belongs to the RNA polymerase beta' chain family. RpoC2 subfamily. As to quaternary structure, in plastids the minimal PEP RNA polymerase catalytic core is composed of four subunits: alpha, beta, beta', and beta''. When a (nuclear-encoded) sigma factor is associated with the core the holoenzyme is formed, which can initiate transcription. Requires Zn(2+) as cofactor.

Its subcellular location is the plastid. It is found in the chloroplast. It carries out the reaction RNA(n) + a ribonucleoside 5'-triphosphate = RNA(n+1) + diphosphate. Its function is as follows. DNA-dependent RNA polymerase catalyzes the transcription of DNA into RNA using the four ribonucleoside triphosphates as substrates. The sequence is that of DNA-directed RNA polymerase subunit beta'' from Lemna minor (Common duckweed).